The primary structure comprises 180 residues: Large ribosomal subunit protein uL6 (180 aa).

This sequence belongs to the universal ribosomal protein uL6 family. In terms of assembly, part of the 50S ribosomal subunit.

Its function is as follows. This protein binds to the 23S rRNA, and is important in its secondary structure. It is located near the subunit interface in the base of the L7/L12 stalk, and near the tRNA binding site of the peptidyltransferase center. In Flavobacterium johnsoniae (strain ATCC 17061 / DSM 2064 / JCM 8514 / BCRC 14874 / CCUG 350202 / NBRC 14942 / NCIMB 11054 / UW101) (Cytophaga johnsonae), this protein is Large ribosomal subunit protein uL6.